The sequence spans 551 residues: Delta-selinene synthase TPS7FN (551 aa).

(2E,6E)-farnesyl diphosphate is bound by residues Arg266, Asp303, Asp307, Arg444, and Asp447. Positions 303 and 307 each coordinate Mg(2+). The DDXXD motif motif lies at Asp303–Asp307. 3 residues coordinate Mg(2+): Asp447, Ser451, and Glu455.

It belongs to the terpene synthase family. Tpsb subfamily. Mg(2+) is required as a cofactor. It depends on Mn(2+) as a cofactor.

It carries out the reaction (2E,6E)-farnesyl diphosphate = delta-selinene + diphosphate. The catalysed reaction is (2E)-geranyl diphosphate = beta-myrcene + diphosphate. The enzyme catalyses (2E)-geranyl diphosphate = (4S)-limonene + diphosphate. It catalyses the reaction (2E,6E)-farnesyl diphosphate + H2O = selina-6-en-4-ol + diphosphate. It functions in the pathway secondary metabolite biosynthesis; terpenoid biosynthesis. In terms of biological role, involved in sesquiterpene olefins biosynthesis, constituants of cannabinoids and terpenoids-rich resins. Catalyzes mainly the conversion of (2E)-farnesyl diphosphate to delta-selinene, and also produces minor products such as selina-6-en-4-ol. Can also use (2E)-geranyl diphosphate as substrate with low efficiency, producing minor amounts of myrcene and limonene. The polypeptide is Delta-selinene synthase TPS7FN (Cannabis sativa (Hemp)).